The following is a 285-amino-acid chain: 2-dehydro-3-deoxyphosphooctonate aldolase (285 aa).

This sequence belongs to the KdsA family.

The protein resides in the cytoplasm. The enzyme catalyses D-arabinose 5-phosphate + phosphoenolpyruvate + H2O = 3-deoxy-alpha-D-manno-2-octulosonate-8-phosphate + phosphate. Its pathway is carbohydrate biosynthesis; 3-deoxy-D-manno-octulosonate biosynthesis; 3-deoxy-D-manno-octulosonate from D-ribulose 5-phosphate: step 2/3. The protein operates within bacterial outer membrane biogenesis; lipopolysaccharide biosynthesis. The sequence is that of 2-dehydro-3-deoxyphosphooctonate aldolase from Acinetobacter baumannii (strain SDF).